We begin with the raw amino-acid sequence, 448 residues long: Signal recognition particle 54 kDa protein (448 aa).

GTP is bound by residues 107 to 114, 189 to 193, and 247 to 250; these read GIQGSGKT, DTAGR, and TKLD.

It belongs to the GTP-binding SRP family. SRP54 subfamily. As to quaternary structure, part of the signal recognition particle protein translocation system, which is composed of SRP and FtsY. Archaeal SRP consists of a 7S RNA molecule of 300 nucleotides and two protein subunits: SRP54 and SRP19.

It localises to the cytoplasm. It carries out the reaction GTP + H2O = GDP + phosphate + H(+). In terms of biological role, involved in targeting and insertion of nascent membrane proteins into the cytoplasmic membrane. Binds to the hydrophobic signal sequence of the ribosome-nascent chain (RNC) as it emerges from the ribosomes. The SRP-RNC complex is then targeted to the cytoplasmic membrane where it interacts with the SRP receptor FtsY. The chain is Signal recognition particle 54 kDa protein from Thermococcus gammatolerans (strain DSM 15229 / JCM 11827 / EJ3).